A 193-amino-acid chain; its full sequence is Crossover junction endodeoxyribonuclease RuvC (193 aa).

Residues Asp7, Glu68, and Asp141 contribute to the active site. Mg(2+) is bound by residues Asp7, Glu68, and Asp141.

It belongs to the RuvC family. In terms of assembly, homodimer which binds Holliday junction (HJ) DNA. The HJ becomes 2-fold symmetrical on binding to RuvC with unstacked arms; it has a different conformation from HJ DNA in complex with RuvA. In the full resolvosome a probable DNA-RuvA(4)-RuvB(12)-RuvC(2) complex forms which resolves the HJ. Requires Mg(2+) as cofactor.

The protein resides in the cytoplasm. The catalysed reaction is Endonucleolytic cleavage at a junction such as a reciprocal single-stranded crossover between two homologous DNA duplexes (Holliday junction).. In terms of biological role, the RuvA-RuvB-RuvC complex processes Holliday junction (HJ) DNA during genetic recombination and DNA repair. Endonuclease that resolves HJ intermediates. Cleaves cruciform DNA by making single-stranded nicks across the HJ at symmetrical positions within the homologous arms, yielding a 5'-phosphate and a 3'-hydroxyl group; requires a central core of homology in the junction. The consensus cleavage sequence is 5'-(A/T)TT(C/G)-3'. Cleavage occurs on the 3'-side of the TT dinucleotide at the point of strand exchange. HJ branch migration catalyzed by RuvA-RuvB allows RuvC to scan DNA until it finds its consensus sequence, where it cleaves and resolves the cruciform DNA. This is Crossover junction endodeoxyribonuclease RuvC from Renibacterium salmoninarum (strain ATCC 33209 / DSM 20767 / JCM 11484 / NBRC 15589 / NCIMB 2235).